Consider the following 1221-residue polypeptide: Putative DNA-directed RNA polymerase II subunit RPB2 homolog (1221 aa).

Composition is skewed to low complexity over residues 1-54 (MSRG…SASS) and 692-701 (PAPSSSPSDS). 2 disordered regions span residues 1 to 63 (MSRG…PMSE) and 673 to 701 (RGSG…PSDS). Asp-823 provides a ligand contact to Mg(2+). Zn(2+) contacts are provided by Cys-1174, Cys-1177, Cys-1187, and Cys-1190. Residues 1174–1190 (CKECGRISDHFEYCRMC) form a C4-type zinc finger.

Belongs to the RNA polymerase beta chain family.

The enzyme catalyses RNA(n) + a ribonucleoside 5'-triphosphate = RNA(n+1) + diphosphate. Component of the DNA-dependent RNA polymerase that catalyzes the transcription of DNA into RNA using the four ribonucleoside triphosphates as substrates. Second largest component of RNA polymerase II which synthesizes mRNA precursors and many functional non-coding RNAs. Proposed to contribute to the polymerase catalytic activity and forms the polymerase active center together with the largest subunit. The chain is Putative DNA-directed RNA polymerase II subunit RPB2 homolog from Dryophytes versicolor (chameleon treefrog).